Reading from the N-terminus, the 309-residue chain is Isoflavone reductase homolog IRL (309 aa).

NADP(+)-binding positions include 12-18, Arg37, and Lys46; that span reads GGTGYLG. The active-site Proton acceptor is the Lys134. An NADP(+)-binding site is contributed by Arg138.

The protein belongs to the NmrA-type oxidoreductase family. Isoflavone reductase subfamily. In terms of assembly, monomer.

It localises to the cytoplasm. It functions in the pathway alkaloid biosynthesis. Its function is as follows. Reductase that may be involved in a late step of alkaloid biosynthesis. In Zea mays (Maize), this protein is Isoflavone reductase homolog IRL.